Reading from the N-terminus, the 274-residue chain is Undecaprenyl-diphosphatase (274 aa).

The next 8 helical transmembrane spans lie at 1–21 (MDWL…FLPI), 42–62 (VKDT…LVYY), 81–101 (LWLG…LFGD), 107–127 (LFRP…MWLL), 142–162 (ISAG…LWPG), 184–204 (TKFS…LDFI), 213–233 (IGVV…YFAI), and 248–268 (FAVY…RGVL).

Belongs to the UppP family.

It localises to the cell membrane. The catalysed reaction is di-trans,octa-cis-undecaprenyl diphosphate + H2O = di-trans,octa-cis-undecaprenyl phosphate + phosphate + H(+). In terms of biological role, catalyzes the dephosphorylation of undecaprenyl diphosphate (UPP). Confers resistance to bacitracin. The protein is Undecaprenyl-diphosphatase of Deinococcus radiodurans (strain ATCC 13939 / DSM 20539 / JCM 16871 / CCUG 27074 / LMG 4051 / NBRC 15346 / NCIMB 9279 / VKM B-1422 / R1).